We begin with the raw amino-acid sequence, 137 residues long: Outer membrane protein assembly factor BamE (137 aa).

The first 18 residues, 1–18, serve as a signal peptide directing secretion; it reads MQVKTLLGATFLALSLAS. Cysteine 19 is lipidated: N-palmitoyl cysteine. Cysteine 19 carries S-diacylglycerol cysteine lipidation.

It belongs to the BamE family. In terms of assembly, part of the Bam complex.

It localises to the cell outer membrane. In terms of biological role, part of the outer membrane protein assembly complex, which is involved in assembly and insertion of beta-barrel proteins into the outer membrane. This chain is Outer membrane protein assembly factor BamE, found in Haemophilus influenzae (strain ATCC 51907 / DSM 11121 / KW20 / Rd).